The sequence spans 72 residues: Translational regulator CsrA (72 aa).

It belongs to the CsrA/RsmA family. Homodimer; the beta-strands of each monomer intercalate to form a hydrophobic core, while the alpha-helices form wings that extend away from the core.

The protein localises to the cytoplasm. A translational regulator that binds mRNA to regulate translation initiation and/or mRNA stability. Usually binds in the 5'-UTR at or near the Shine-Dalgarno sequence preventing ribosome-binding, thus repressing translation. Its main target seems to be the major flagellin gene, while its function is anatagonized by FliW. This chain is Translational regulator CsrA, found in Agathobacter rectalis (strain ATCC 33656 / DSM 3377 / JCM 17463 / KCTC 5835 / VPI 0990) (Eubacterium rectale).